The following is a 256-amino-acid chain: Distal membrane-arm assembly complex protein 2 (256 aa).

Phosphoserine is present on serine 252.

Belongs to the ATP synthase subunit s family. In terms of assembly, interacts with incompletely assembled mitochondrial NADH:ubiquinone oxidoreductase complex (complex I).

Its subcellular location is the mitochondrion. Required for the assembly of the mitochondrial NADH:ubiquinone oxidoreductase complex (complex I). Involved in the assembly of the distal region of complex I. The polypeptide is Distal membrane-arm assembly complex protein 2 (Macaca fascicularis (Crab-eating macaque)).